Consider the following 258-residue polypeptide: Diacetyl reductase [(S)-acetoin forming] (258 aa).

An NAD(+)-binding site is contributed by 8–32 (LVTGGAQGIGFKIAERLVEDGFKVA). Ser141 provides a ligand contact to substrate. Catalysis depends on Tyr154, which acts as the Proton acceptor. Lys158 is a catalytic residue.

It belongs to the short-chain dehydrogenases/reductases (SDR) family.

The catalysed reaction is (S)-acetoin + NAD(+) = diacetyl + NADH + H(+). Functionally, catalyzes the irreversible reduction of 2,3-butanediol to (S)-acetoin in the presence of NADH. This Staphylococcus aureus (strain Mu50 / ATCC 700699) protein is Diacetyl reductase [(S)-acetoin forming] (butA).